Consider the following 159-residue polypeptide: Endoribonuclease YbeY (159 aa).

Positions 124, 128, and 134 each coordinate Zn(2+).

It belongs to the endoribonuclease YbeY family. Zn(2+) serves as cofactor.

It localises to the cytoplasm. Functionally, single strand-specific metallo-endoribonuclease involved in late-stage 70S ribosome quality control and in maturation of the 3' terminus of the 16S rRNA. The chain is Endoribonuclease YbeY from Halalkalibacterium halodurans (strain ATCC BAA-125 / DSM 18197 / FERM 7344 / JCM 9153 / C-125) (Bacillus halodurans).